We begin with the raw amino-acid sequence, 445 residues long: Phosphoglucosamine mutase (445 aa).

The Phosphoserine intermediate role is filled by S99. Mg(2+)-binding residues include S99, D242, D244, and D246. The residue at position 99 (S99) is a Phosphoserine.

This sequence belongs to the phosphohexose mutase family. The cofactor is Mg(2+). In terms of processing, activated by phosphorylation.

The enzyme catalyses alpha-D-glucosamine 1-phosphate = D-glucosamine 6-phosphate. Functionally, catalyzes the conversion of glucosamine-6-phosphate to glucosamine-1-phosphate. The chain is Phosphoglucosamine mutase from Campylobacter jejuni subsp. jejuni serotype O:2 (strain ATCC 700819 / NCTC 11168).